Consider the following 390-residue polypeptide: Glutamyl-tRNA reductase (390 aa).

Residues 46–49, Ser-96, 101–103, and Gln-107 each bind substrate; these read TCNR and EAQ. Cys-47 functions as the Nucleophile in the catalytic mechanism. 176–181 contributes to the NADP(+) binding site; that stretch reads GAGEMA.

The protein belongs to the glutamyl-tRNA reductase family. As to quaternary structure, homodimer.

It catalyses the reaction (S)-4-amino-5-oxopentanoate + tRNA(Glu) + NADP(+) = L-glutamyl-tRNA(Glu) + NADPH + H(+). Its pathway is porphyrin-containing compound metabolism; protoporphyrin-IX biosynthesis; 5-aminolevulinate from L-glutamyl-tRNA(Glu): step 1/2. Catalyzes the NADPH-dependent reduction of glutamyl-tRNA(Glu) to glutamate 1-semialdehyde (GSA). This Thermus thermophilus (strain ATCC 27634 / DSM 579 / HB8) protein is Glutamyl-tRNA reductase.